The primary structure comprises 247 residues: MARFKLTLEYDGSNYAGWQRQAELRTVQGAVEQAIFHFSGQQLTITTAGRTDAGVHATGQVAHVDFEKDWHVNTIHNALNAHLRQQGDNIAILNVENIPDSFDARLSAVKRHYLFKILNRRAPPALNAKRVWWLPRPLNADAMHKAAQKLVGKHDFTTFRSAHCQAKSPIRTLECLDVQREGEEIFLYARARSFLHHQIRSFAGSLMEVGIGRWTAQDLEEALHAKDRARCGMVAPPSGLYLTQVDY.

Aspartate 52 serves as the catalytic Nucleophile. Residue tyrosine 113 participates in substrate binding.

This sequence belongs to the tRNA pseudouridine synthase TruA family. Homodimer.

The catalysed reaction is uridine(38/39/40) in tRNA = pseudouridine(38/39/40) in tRNA. Its function is as follows. Formation of pseudouridine at positions 38, 39 and 40 in the anticodon stem and loop of transfer RNAs. The sequence is that of tRNA pseudouridine synthase A from Bartonella bacilliformis (strain ATCC 35685 / KC583 / Herrer 020/F12,63).